We begin with the raw amino-acid sequence, 431 residues long: Adenylosuccinate synthetase (431 aa).

Residues 12-18 (GDEGKGK) and 40-42 (GHT) each bind GTP. The active-site Proton acceptor is the aspartate 13. Aspartate 13 and glycine 40 together coordinate Mg(2+). IMP is bound by residues 13-16 (DEGK), 38-41 (NAGH), threonine 131, arginine 145, glutamine 225, threonine 240, and arginine 304. Histidine 41 functions as the Proton donor in the catalytic mechanism. Substrate is bound at residue 300–306 (TTTGRKR). GTP-binding positions include arginine 306, 332–334 (KLD), and 414–416 (STS).

It belongs to the adenylosuccinate synthetase family. As to quaternary structure, homodimer. Mg(2+) is required as a cofactor.

It localises to the cytoplasm. The catalysed reaction is IMP + L-aspartate + GTP = N(6)-(1,2-dicarboxyethyl)-AMP + GDP + phosphate + 2 H(+). Its pathway is purine metabolism; AMP biosynthesis via de novo pathway; AMP from IMP: step 1/2. Its function is as follows. Plays an important role in the de novo pathway of purine nucleotide biosynthesis. Catalyzes the first committed step in the biosynthesis of AMP from IMP. This Dinoroseobacter shibae (strain DSM 16493 / NCIMB 14021 / DFL 12) protein is Adenylosuccinate synthetase.